Reading from the N-terminus, the 131-residue chain is Small ribosomal subunit protein uS11 (131 aa).

It belongs to the universal ribosomal protein uS11 family. As to quaternary structure, part of the 30S ribosomal subunit. Interacts with proteins S7 and S18. Binds to IF-3.

Functionally, located on the platform of the 30S subunit, it bridges several disparate RNA helices of the 16S rRNA. Forms part of the Shine-Dalgarno cleft in the 70S ribosome. The protein is Small ribosomal subunit protein uS11 of Natranaerobius thermophilus (strain ATCC BAA-1301 / DSM 18059 / JW/NM-WN-LF).